An 83-amino-acid chain; its full sequence is uncharacterized protein (83 aa).

2 helical membrane-spanning segments follow: residues 11–31 (FYCIVTIPSAFVVLTVISFLL) and 48–68 (WHNLLFLIPFGLFFYPVHIWM).

Its subcellular location is the cell membrane. This is an uncharacterized protein from Bacillus subtilis (strain 168).